The sequence spans 204 residues: Putative peroxiredoxin ycf42 (204 aa).

The 159-residue stretch at 5–163 (PKIGKTPPNF…LLRILESIQY (159 aa)) folds into the Thioredoxin domain.

Belongs to the peroxiredoxin family. AhpC/Prx1 subfamily.

The protein localises to the plastid. The protein resides in the chloroplast. The enzyme catalyses a hydroperoxide + [protein]-dithiol = [protein]-disulfide + an alcohol + H2O. The protein is Putative peroxiredoxin ycf42 (ycf42) of Trieres chinensis (Marine centric diatom).